A 249-amino-acid polypeptide reads, in one-letter code: Uridylate kinase (249 aa).

ATP is bound at residue 22–25; it reads KISG. An involved in allosteric activation by GTP region spans residues 30–35; it reads GTQGFG. G64 is a binding site for UMP. ATP-binding residues include G65 and R69. UMP is bound by residues D84 and 145-152; that span reads TGNPYFTT. Positions 173, 179, and 182 each coordinate ATP.

Belongs to the UMP kinase family. As to quaternary structure, homohexamer.

Its subcellular location is the cytoplasm. The catalysed reaction is UMP + ATP = UDP + ADP. The protein operates within pyrimidine metabolism; CTP biosynthesis via de novo pathway; UDP from UMP (UMPK route): step 1/1. Its activity is regulated as follows. Allosterically activated by GTP. Inhibited by UTP. Catalyzes the reversible phosphorylation of UMP to UDP. The polypeptide is Uridylate kinase (Ruegeria sp. (strain TM1040) (Silicibacter sp.)).